The primary structure comprises 45 residues: MKMSERRVGSYRKSTLRCWDWCKEQRTRAYIIWRCLIFLLRWDDY.

A required for DVL/RTFL small polypeptide activity region spans residues 13–44; it reads KSTLRCWDWCKEQRTRAYIIWRCLIFLLRWDD. A helical transmembrane segment spans residues 22–39; the sequence is CKEQRTRAYIIWRCLIFL.

This sequence belongs to the DVL/RTFL small polypeptides family.

The protein localises to the cell membrane. Functionally, small polypeptide acting as a regulatory molecule which coordinates cellular responses required for differentiation, growth and development, probably by restricting polar cell proliferation in lateral organs and coordinating socket cell recruitment and differentiation at trichome sites. This chain is Small polypeptide DEVIL 23, found in Arabidopsis thaliana (Mouse-ear cress).